A 227-amino-acid polypeptide reads, in one-letter code: PKHD-type hydroxylase M446_1130 (227 aa).

Residues 78–178 (QIFPPLFNRY…RVASFFWLQS (101 aa)) enclose the Fe2OG dioxygenase domain. Fe cation is bound by residues histidine 96, aspartate 98, and histidine 159. Residue arginine 169 participates in 2-oxoglutarate binding.

Fe(2+) serves as cofactor. The cofactor is L-ascorbate.

The polypeptide is PKHD-type hydroxylase M446_1130 (Methylobacterium sp. (strain 4-46)).